A 448-amino-acid polypeptide reads, in one-letter code: Probable glycine dehydrogenase (decarboxylating) subunit 1 (448 aa).

Belongs to the GcvP family. N-terminal subunit subfamily. The glycine cleavage system is composed of four proteins: P, T, L and H. In this organism, the P 'protein' is a heterodimer of two subunits.

The catalysed reaction is N(6)-[(R)-lipoyl]-L-lysyl-[glycine-cleavage complex H protein] + glycine + H(+) = N(6)-[(R)-S(8)-aminomethyldihydrolipoyl]-L-lysyl-[glycine-cleavage complex H protein] + CO2. The glycine cleavage system catalyzes the degradation of glycine. The P protein binds the alpha-amino group of glycine through its pyridoxal phosphate cofactor; CO(2) is released and the remaining methylamine moiety is then transferred to the lipoamide cofactor of the H protein. In Bacillus licheniformis (strain ATCC 14580 / DSM 13 / JCM 2505 / CCUG 7422 / NBRC 12200 / NCIMB 9375 / NCTC 10341 / NRRL NRS-1264 / Gibson 46), this protein is Probable glycine dehydrogenase (decarboxylating) subunit 1.